The chain runs to 266 residues: Indole-3-glycerol phosphate synthase (266 aa).

It belongs to the TrpC family.

The catalysed reaction is 1-(2-carboxyphenylamino)-1-deoxy-D-ribulose 5-phosphate + H(+) = (1S,2R)-1-C-(indol-3-yl)glycerol 3-phosphate + CO2 + H2O. It participates in amino-acid biosynthesis; L-tryptophan biosynthesis; L-tryptophan from chorismate: step 4/5. The polypeptide is Indole-3-glycerol phosphate synthase (Acidovorax sp. (strain JS42)).